A 206-amino-acid chain; its full sequence is Imidazoleglycerol-phosphate dehydratase (206 aa).

The protein belongs to the imidazoleglycerol-phosphate dehydratase family.

The protein localises to the cytoplasm. It carries out the reaction D-erythro-1-(imidazol-4-yl)glycerol 3-phosphate = 3-(imidazol-4-yl)-2-oxopropyl phosphate + H2O. It functions in the pathway amino-acid biosynthesis; L-histidine biosynthesis; L-histidine from 5-phospho-alpha-D-ribose 1-diphosphate: step 6/9. The protein is Imidazoleglycerol-phosphate dehydratase of Leptospira interrogans serogroup Icterohaemorrhagiae serovar copenhageni (strain Fiocruz L1-130).